A 256-amino-acid chain; its full sequence is Acetyl-coenzyme A carboxylase carboxyl transferase subunit alpha (256 aa).

The 236-residue stretch at 1 to 236 (MSDVARILKE…KTAIVDELAE (236 aa)) folds into the CoA carboxyltransferase C-terminal domain.

This sequence belongs to the AccA family. In terms of assembly, acetyl-CoA carboxylase is a heterohexamer composed of biotin carboxyl carrier protein (AccB), biotin carboxylase (AccC) and two subunits each of ACCase subunit alpha (AccA) and ACCase subunit beta (AccD).

It localises to the cytoplasm. It carries out the reaction N(6)-carboxybiotinyl-L-lysyl-[protein] + acetyl-CoA = N(6)-biotinyl-L-lysyl-[protein] + malonyl-CoA. It functions in the pathway lipid metabolism; malonyl-CoA biosynthesis; malonyl-CoA from acetyl-CoA: step 1/1. Functionally, component of the acetyl coenzyme A carboxylase (ACC) complex. First, biotin carboxylase catalyzes the carboxylation of biotin on its carrier protein (BCCP) and then the CO(2) group is transferred by the carboxyltransferase to acetyl-CoA to form malonyl-CoA. This chain is Acetyl-coenzyme A carboxylase carboxyl transferase subunit alpha, found in Streptococcus thermophilus (strain CNRZ 1066).